The sequence spans 510 residues: Pentatricopeptide repeat-containing protein At1g71060, mitochondrial (510 aa).

Residues 1-14 (MVFSRFFRVTGVNL) constitute a mitochondrion transit peptide. 10 PPR repeats span residues 127 to 157 (TTSNYNALIESLGKIKQFKLIWSLVDDMKAK), 161 to 195 (SKETFALISRRYARARKVKEAIGAFHKMEEFGFKM), 196 to 230 (ESSDFNRMLDTLSKSRNVGDAQKVFDKMKKKRFEP), 231 to 265 (DIKSYTILLEGWGQELNLLRVDEVNREMKDEGFEP), 266 to 300 (DVVAYGIIINAHCKAKKYEEAIRFFNEMEQRNCKP), 301 to 335 (SPHIFCSLINGLGSEKKLNDALEFFERSKSSGFPL), 336 to 370 (EAPTYNALVGAYCWSQRMEDAYKTVDEMRLKGVGP), 371 to 401 (NARTYDIILHHLIRMQRSKEAYEVYQTMSCE), 403 to 437 (TVSTYEIMVRMFCNKERLDMAIKIWDEMKGKGVLP), and 438 to 472 (GMHMFSSLITALCHENKLDEACEYFNEMLDVGIRP).

Belongs to the PPR family. P subfamily.

It is found in the mitochondrion. The polypeptide is Pentatricopeptide repeat-containing protein At1g71060, mitochondrial (Arabidopsis thaliana (Mouse-ear cress)).